The following is a 219-amino-acid chain: Interleukin-12 subunit alpha (219 aa).

A signal peptide spans 1-22; that stretch reads MCPARSLLLVATLVLLDYLSLA. N-linked (GlcNAc...) asparagine glycans are attached at residues N24 and N93. 3 disulfide bridges follow: C37/C110, C64/C196, and C85/C123.

The protein belongs to the IL-6 superfamily. As to quaternary structure, heterodimer with IL12B; disulfide-linked. This heterodimer is known as interleukin IL-12. Heterodimer with EBI3/IL27B; not disulfide-linked. This heterodimer is known as interleukin IL-35. Interacts with NBR1; this interaction promotes IL-12 secretion.

It localises to the secreted. In terms of biological role, heterodimerizes with IL12B to form the IL-12 cytokine or with EBI3/IL27B to form the IL-35 cytokine. IL-12 is primarily produced by professional antigen-presenting cells (APCs) such as B-cells and dendritic cells (DCs) as well as macrophages and granulocytes and regulates T-cell and natural killer-cell responses, induces the production of interferon-gamma (IFN-gamma), favors the differentiation of T-helper 1 (Th1) cells and is an important link between innate resistance and adaptive immunity. Mechanistically, exerts its biological effects through a receptor composed of IL12R1 and IL12R2 subunits. Binding to the receptor results in the rapid tyrosine phosphorylation of a number of cellular substrates including the JAK family kinases TYK2 and JAK2. In turn, recruited STAT4 gets phosphorylated and translocates to the nucleus where it regulates cytokine/growth factor responsive genes. As part of IL-35, plays essential roles in maintaining the immune homeostasis of the liver microenvironment and also functions as an immune-suppressive cytokine. Mediates biological events through unconventional receptors composed of IL12RB2 and gp130/IL6ST heterodimers or homodimers. Signaling requires the transcription factors STAT1 and STAT4, which form a unique heterodimer that binds to distinct DNA sites. The chain is Interleukin-12 subunit alpha (IL12A) from Papio anubis (Olive baboon).